The following is a 333-amino-acid chain: Autoinducer 2 import system permease protein LsrD (333 aa).

Helical transmembrane passes span 7 to 27, 45 to 65, 70 to 90, 91 to 111, 118 to 138, 162 to 182, 212 to 232, 240 to 260, 261 to 281, and 288 to 308; these read YGWE…FGIA, ICIG…GIDI, TIGL…PMAA, AIPL…ALIL, LVIT…LSGI, LFGL…CWLF, TLYL…IVLV, SDLG…GGAN, IYGG…IGYL, and AGVP…IAVV.

This sequence belongs to the binding-protein-dependent transport system permease family. AraH/RbsC subfamily. In terms of assembly, the complex is composed of two ATP-binding proteins (LsrA), two transmembrane proteins (LsrC and LsrD) and a solute-binding protein (LsrB).

It is found in the cell inner membrane. In terms of biological role, part of the ABC transporter complex LsrABCD involved in autoinducer 2 (AI-2) import. Probably responsible for the translocation of the substrate across the membrane. In Photorhabdus luminescens (Xenorhabdus luminescens), this protein is Autoinducer 2 import system permease protein LsrD (lsrD).